A 636-amino-acid polypeptide reads, in one-letter code: 1-deoxy-D-xylulose-5-phosphate synthase (636 aa).

Thiamine diphosphate is bound by residues histidine 74 and 115 to 117; that span reads GHA. Aspartate 146 contacts Mg(2+). Thiamine diphosphate-binding positions include 147-148, asparagine 175, tyrosine 285, and glutamate 368; that span reads GA. Asparagine 175 lines the Mg(2+) pocket.

It belongs to the transketolase family. DXPS subfamily. Homodimer. Mg(2+) is required as a cofactor. Thiamine diphosphate serves as cofactor.

The catalysed reaction is D-glyceraldehyde 3-phosphate + pyruvate + H(+) = 1-deoxy-D-xylulose 5-phosphate + CO2. The protein operates within metabolic intermediate biosynthesis; 1-deoxy-D-xylulose 5-phosphate biosynthesis; 1-deoxy-D-xylulose 5-phosphate from D-glyceraldehyde 3-phosphate and pyruvate: step 1/1. Functionally, catalyzes the acyloin condensation reaction between C atoms 2 and 3 of pyruvate and glyceraldehyde 3-phosphate to yield 1-deoxy-D-xylulose-5-phosphate (DXP). The chain is 1-deoxy-D-xylulose-5-phosphate synthase from Anaeromyxobacter dehalogenans (strain 2CP-C).